The primary structure comprises 683 residues: Translation factor guf1, mitochondrial (683 aa).

Residues 1-43 (MRGCLQLARWLSAAPKGTAASLTRAPFVLANAPRFFTSSASHA) constitute a mitochondrion transit peptide. A tr-type G domain is found at 66-250 (ERYRNFCIVA…KIPAYGYFPV (185 aa)). GTP-binding positions include 75-82 (AHVDHGKS), 139-143 (DTPGH), and 193-196 (NKVD).

It belongs to the TRAFAC class translation factor GTPase superfamily. Classic translation factor GTPase family. LepA subfamily.

The protein resides in the mitochondrion inner membrane. It carries out the reaction GTP + H2O = GDP + phosphate + H(+). In terms of biological role, promotes mitochondrial protein synthesis. May act as a fidelity factor of the translation reaction, by catalyzing a one-codon backward translocation of tRNAs on improperly translocated ribosomes. Binds to mitochondrial ribosomes in a GTP-dependent manner. This chain is Translation factor guf1, mitochondrial (guf1), found in Neosartorya fischeri (strain ATCC 1020 / DSM 3700 / CBS 544.65 / FGSC A1164 / JCM 1740 / NRRL 181 / WB 181) (Aspergillus fischerianus).